Here is a 265-residue protein sequence, read N- to C-terminus: Small ribosomal subunit protein uS2 (265 aa).

Positions 231–265 are disordered; the sequence is VEEEYEDYEGSEEDYDYDETEYADSVIPEDGEEAE.

This sequence belongs to the universal ribosomal protein uS2 family.

The sequence is that of Small ribosomal subunit protein uS2 from Nostoc sp. (strain PCC 7120 / SAG 25.82 / UTEX 2576).